Consider the following 245-residue polypeptide: 23S rRNA (guanosine-2'-O-)-methyltransferase RlmB (245 aa).

S-adenosyl-L-methionine contacts are provided by Gly197, Ile217, and Leu226.

This sequence belongs to the class IV-like SAM-binding methyltransferase superfamily. RNA methyltransferase TrmH family. RlmB subfamily.

It localises to the cytoplasm. The catalysed reaction is guanosine(2251) in 23S rRNA + S-adenosyl-L-methionine = 2'-O-methylguanosine(2251) in 23S rRNA + S-adenosyl-L-homocysteine + H(+). Its function is as follows. Specifically methylates the ribose of guanosine 2251 in 23S rRNA. The sequence is that of 23S rRNA (guanosine-2'-O-)-methyltransferase RlmB from Bordetella parapertussis (strain 12822 / ATCC BAA-587 / NCTC 13253).